A 103-amino-acid polypeptide reads, in one-letter code: Methane monooxygenase component D (103 aa).

The soluble methane monooxygenase (sMMO) consists of four components A/MMOH (composed of alpha/MmoX, beta/MmoY and gamma/MmoZ), B/MMOB (MmoB), C/MMOR (MmoC) and D/MMOD (MmoD).

This is Methane monooxygenase component D (mmoD) from Methylococcus capsulatus (strain ATCC 33009 / NCIMB 11132 / Bath).